The primary structure comprises 154 residues: SsrA-binding protein (154 aa).

It belongs to the SmpB family.

It is found in the cytoplasm. In terms of biological role, required for rescue of stalled ribosomes mediated by trans-translation. Binds to transfer-messenger RNA (tmRNA), required for stable association of tmRNA with ribosomes. tmRNA and SmpB together mimic tRNA shape, replacing the anticodon stem-loop with SmpB. tmRNA is encoded by the ssrA gene; the 2 termini fold to resemble tRNA(Ala) and it encodes a 'tag peptide', a short internal open reading frame. During trans-translation Ala-aminoacylated tmRNA acts like a tRNA, entering the A-site of stalled ribosomes, displacing the stalled mRNA. The ribosome then switches to translate the ORF on the tmRNA; the nascent peptide is terminated with the 'tag peptide' encoded by the tmRNA and targeted for degradation. The ribosome is freed to recommence translation, which seems to be the essential function of trans-translation. The protein is SsrA-binding protein of Treponema pallidum (strain Nichols).